A 432-amino-acid polypeptide reads, in one-letter code: Chorismate synthase aro-2 (432 aa).

Active-site residues include His17, His106, and Asp367. The segment at 406 to 432 (LKQTINSGKDTVGNGVSENVQESDLAQ) is disordered. Positions 408–432 (QTINSGKDTVGNGVSENVQESDLAQ) are enriched in polar residues.

The protein belongs to the chorismate synthase family. As to quaternary structure, homotetramer.

It carries out the reaction 5-O-(1-carboxyvinyl)-3-phosphoshikimate = chorismate + phosphate. It catalyses the reaction FMNH2 + NADP(+) = FMN + NADPH + 2 H(+). The protein operates within metabolic intermediate biosynthesis; chorismate biosynthesis; chorismate from D-erythrose 4-phosphate and phosphoenolpyruvate: step 7/7. Functionally, bifunctional chorismate synthase and flavin reductase that catalyzes the conversion of 5-enolpyruvylshikimate 3-phosphate (EPSP) to form chorismate, which is the last common intermediate in the synthesis of the three aromatic amino acids phenylalanine, tyrosine and tryptophan. Acts also as a flavin reductase (FR) able to generate reduced flavin mononucleotide in the presence of NADPH. This is Chorismate synthase aro-2 from Neurospora crassa (strain ATCC 24698 / 74-OR23-1A / CBS 708.71 / DSM 1257 / FGSC 987).